The following is a 29-amino-acid chain: Cytochrome b6-f complex subunit 8 (29 aa).

The chain crosses the membrane as a helical span at residues 3 to 23 (IVSLAWASLMVVFTFSLSLVV).

It belongs to the PetN family. In terms of assembly, the 4 large subunits of the cytochrome b6-f complex are cytochrome b6, subunit IV (17 kDa polypeptide, PetD), cytochrome f and the Rieske protein, while the 4 small subunits are PetG, PetL, PetM and PetN. The complex functions as a dimer.

The protein resides in the plastid. The protein localises to the chloroplast thylakoid membrane. Its function is as follows. Component of the cytochrome b6-f complex, which mediates electron transfer between photosystem II (PSII) and photosystem I (PSI), cyclic electron flow around PSI, and state transitions. In Coffea arabica (Arabian coffee), this protein is Cytochrome b6-f complex subunit 8.